The chain runs to 2184 residues: Genome polyprotein (2184 aa).

The N-myristoyl glycine; by host moiety is linked to residue G2. The Cytoplasmic segment spans residues 2 to 1494 (GAQVSTQKTG…HVSRAFICLQ (1493 aa)). The segment at 566 to 582 (FYQSPVEGAIERAIARV) is amphipathic alpha-helix. Catalysis depends on for protease 2A activity residues H871 and D889. Residues C906 and C908 each coordinate Zn(2+). The active-site For protease 2A activity is the C960. C966 and H968 together coordinate Zn(2+). The segment at 1100-1172 (SNGWLKKFTE…EQSAPSQSDQ (73 aa)) is membrane-binding. The tract at residues 1100–1238 (SNGWLKKFTE…SPGAGKSVAT (139 aa)) is oligomerization. The segment at 1121–1125 (AIKIQ) is RNA-binding. One can recognise an SF3 helicase domain in the interval 1204–1360 (EKKMSNYIQF…SMYSQNGKIN (157 aa)). Zn(2+) is bound by residues C1368, C1380, and C1385. A C4-type; degenerate zinc finger spans residues 1368–1385 (CDEECCPVNFKKCCPLVC). Positions 1412-1419 (EYNHRHSV) are RNA-binding. Residues 1423–1428 (LEALFQ) are oligomerization. Residues 1495 to 1510 (ALTTFVSVAGIIYIIY) lie within the membrane without spanning it. Residues 1511–2184 (KLFAGFQGAY…TLRRKWLDSF (674 aa)) are Cytoplasmic-facing. Y1520 is subject to O-(5'-phospho-RNA)-tyrosine. The Peptidase C3 domain maps to 1540 to 1718 (GPAFEFAVAM…FSAALLKHYF (179 aa)). Catalysis depends on for protease 3C activity residues H1579, E1610, and C1686. The RdRp catalytic domain maps to 1949 to 2065 (GHLIAFDYSG…SYPWPIDASL (117 aa)). Mg(2+)-binding residues include D1955 and D2051.

The protein belongs to the picornaviruses polyprotein family. As to quaternary structure, interacts with capsid protein VP1 and capsid protein VP3 to form heterotrimeric protomers. Interacts with capsid protein VP0, and capsid protein VP3 to form heterotrimeric protomers. Five protomers subsequently associate to form pentamers which serve as building blocks for the capsid. Interacts with capsid protein VP2, capsid protein VP3 and capsid protein VP4 following cleavage of capsid protein VP0. Interacts with host CXADR. In terms of assembly, interacts with capsid protein VP1 and capsid protein VP3 in the mature capsid. As to quaternary structure, interacts with capsid protein VP0 and capsid protein VP1 to form heterotrimeric protomers. Five protomers subsequently associate to form pentamers which serve as building blocks for the capsid. Interacts with capsid protein VP4 in the mature capsid. Interacts with protein 2C; this interaction may be important for virion morphogenesis. Interacts with capsid protein VP1 and capsid protein VP3. In terms of assembly, homodimer. As to quaternary structure, homohexamer; forms a hexameric ring structure with 6-fold symmetry characteristic of AAA+ ATPases. Interacts (via N-terminus) with host RTN3 (via reticulon domain); this interaction is important for viral replication. Interacts with capsid protein VP3; this interaction may be important for virion morphogenesis. Interacts with protein 3CD. In terms of assembly, homodimer. Interacts with host GBF1. Interacts (via GOLD domain) with host ACBD3 (via GOLD domain); this interaction allows the formation of a viral protein 3A/ACBD3 heterotetramer with a 2:2 stoichiometry, which will stimulate the recruitment of host PI4KB in order to synthesize PI4P at the viral RNA replication sites. As to quaternary structure, interacts with RNA-directed RNA polymerase. Interacts with protein 3AB and with RNA-directed RNA polymerase. In terms of assembly, interacts with Viral protein genome-linked and with protein 3CD. Mg(2+) serves as cofactor. Specific enzymatic cleavages in vivo by the viral proteases yield processing intermediates and the mature proteins. Post-translationally, myristoylation is required for the formation of pentamers during virus assembly. Further assembly of 12 pentamers and a molecule of genomic RNA generates the provirion. In terms of processing, during virion maturation, immature virions are rendered infectious following cleavage of VP0 into VP4 and VP2. This maturation seems to be an autocatalytic event triggered by the presence of RNA in the capsid and it is followed by a conformational change infectious virion. Myristoylation is required during RNA encapsidation and formation of the mature virus particle. Post-translationally, VPg is uridylylated by the polymerase into VPg-pUpU. This acts as a nucleotide-peptide primer for the genomic RNA replication.

The protein localises to the virion. The protein resides in the host cytoplasm. It localises to the host cytoplasmic vesicle membrane. It is found in the host nucleus. The catalysed reaction is a ribonucleoside 5'-triphosphate + H2O = a ribonucleoside 5'-diphosphate + phosphate + H(+). The enzyme catalyses Selective cleavage of Tyr-|-Gly bond in the picornavirus polyprotein.. It carries out the reaction RNA(n) + a ribonucleoside 5'-triphosphate = RNA(n+1) + diphosphate. It catalyses the reaction Selective cleavage of Gln-|-Gly bond in the poliovirus polyprotein. In other picornavirus reactions Glu may be substituted for Gln, and Ser or Thr for Gly.. With respect to regulation, replication or transcription is subject to high level of random mutations by the nucleotide analog ribavirin. Forms an icosahedral capsid of pseudo T=3 symmetry with capsid proteins VP2 and VP3. The capsid is 300 Angstroms in diameter, composed of 60 copies of each capsid protein and enclosing the viral positive strand RNA genome. Capsid protein VP1 mainly forms the vertices of the capsid. Capsid protein VP1 interacts with host CXADR to provide virion attachment to target host cells. This attachment induces virion internalization. Tyrosine kinases are probably involved in the entry process. After binding to its receptor, the capsid undergoes conformational changes. Capsid protein VP1 N-terminus (that contains an amphipathic alpha-helix) and capsid protein VP4 are externalized. Together, they shape a pore in the host membrane through which viral genome is translocated to host cell cytoplasm. Functionally, forms an icosahedral capsid of pseudo T=3 symmetry with capsid proteins VP2 and VP3. The capsid is 300 Angstroms in diameter, composed of 60 copies of each capsid protein and enclosing the viral positive strand RNA genome. Its function is as follows. Lies on the inner surface of the capsid shell. After binding to the host receptor, the capsid undergoes conformational changes. Capsid protein VP4 is released, Capsid protein VP1 N-terminus is externalized, and together, they shape a pore in the host membrane through which the viral genome is translocated into the host cell cytoplasm. In terms of biological role, component of immature procapsids, which is cleaved into capsid proteins VP4 and VP2 after maturation. Allows the capsid to remain inactive before the maturation step. Cysteine protease that cleaves viral polyprotein and specific host proteins. It is responsible for the autocatalytic cleavage between the P1 and P2 regions, which is the first cleavage occurring in the polyprotein. Also cleaves the host translation initiation factor EIF4G1, in order to shut down the capped cellular mRNA translation. Inhibits the host nucleus-cytoplasm protein and RNA trafficking by cleaving host members of the nuclear pores. Counteracts stress granule formation probably by antagonizing its assembly or promoting its dissassembly. Cleaves and inhibits host IFIH1/MDA5, thereby inhibiting the type-I IFN production and the establishment of the antiviral state. Cleaves and inhibits host MAVS, thereby inhibiting the type-I IFN production and the establishment of the antiviral state. Functionally, plays an essential role in the virus replication cycle by acting as a viroporin. Creates a pore in the host endoplasmic reticulum and as a consequence releases Ca2+ in the cytoplasm of infected cell. In turn, high levels of cytoplasmic calcium may trigger membrane trafficking and transport of viral ER-associated proteins to viroplasms, sites of viral genome replication. Its function is as follows. Induces and associates with structural rearrangements of intracellular membranes. Displays RNA-binding, nucleotide binding and NTPase activities. May play a role in virion morphogenesis and viral RNA encapsidation by interacting with the capsid protein VP3. In terms of biological role, localizes the viral replication complex to the surface of membranous vesicles. Together with protein 3CD binds the Cis-Active RNA Element (CRE) which is involved in RNA synthesis initiation. Acts as a cofactor to stimulate the activity of 3D polymerase, maybe through a nucleid acid chaperone activity. Localizes the viral replication complex to the surface of membranous vesicles. It inhibits host cell endoplasmic reticulum-to-Golgi apparatus transport and causes the disassembly of the Golgi complex, possibly through GBF1 interaction. This would result in depletion of MHC, trail receptors and IFN receptors at the host cell surface. Plays an essential role in viral RNA replication by recruiting ACBD3 and PI4KB at the viral replication sites, thereby allowing the formation of the rearranged membranous structures where viral replication takes place. Functionally, acts as a primer for viral RNA replication and remains covalently bound to viral genomic RNA. VPg is uridylylated prior to priming replication into VPg-pUpU. The oriI viral genomic sequence may act as a template for this. The VPg-pUpU is then used as primer on the genomic RNA poly(A) by the RNA-dependent RNA polymerase to replicate the viral genome. During genome replication, the VPg-RNA linkage is removed by the host TDP2, thereby accelerating replication. During the late stage of the replication cycle, host TDP2 is excluded from sites of viral RNA synthesis and encapsidation, allowing for the generation of progeny virions. Its function is as follows. Involved in the viral replication complex and viral polypeptide maturation. It exhibits protease activity with a specificity and catalytic efficiency that is different from protease 3C. Protein 3CD lacks polymerase activity. Protein 3CD binds to the 5'UTR of the viral genome. In terms of biological role, replicates the viral genomic RNA on the surface of intracellular membranes. May form linear arrays of subunits that propagate along a strong head-to-tail interaction called interface-I. Covalently attaches UMP to a tyrosine of VPg, which is used to prime RNA synthesis. The positive stranded RNA genome is first replicated at virus induced membranous vesicles, creating a dsRNA genomic replication form. This dsRNA is then used as template to synthesize positive stranded RNA genomes. ss(+)RNA genomes are either translated, replicated or encapsidated. Major viral protease that mediates proteolytic processing of the polyprotein. Cleaves host EIF5B, contributing to host translation shutoff. Also cleaves host PABPC1, contributing to host translation shutoff. Cleaves host NLRP1, triggers host N-glycine-mediated degradation of the autoinhibitory NLRP1 N-terminal fragment. This is Genome polyprotein from Coxsackievirus B6 (strain Schmitt).